Here is a 747-residue protein sequence, read N- to C-terminus: DNA repair and recombination protein RAD54-like (747 aa).

The segment at 1–41 (MRRSLAPSQLAKRKPEGRSCDDEDWQPGLVTPRKRKSSSET) is disordered. Positions 2–9 (RRSLAPSQ) are required for chromatin remodeling, strand pairing activities and coupling of ATPase activity. Residue Ser-38 is modified to Phosphoserine. A Helicase ATP-binding domain is found at 170-345 (SRRIPGSHGC…FSLVHFVNSG (176 aa)). 183–190 (DEMGLGKT) serves as a coordination point for ATP. Positions 296-299 (DEGH) match the DEGH box motif. One can recognise a Helicase C-terminal domain in the interval 500-653 (VLDYILAVTR…CVVDEEQDVE (154 aa)). An N6-acetyllysine modification is found at Lys-515. A Phosphoserine; by NEK1 modification is found at Ser-572.

This sequence belongs to the SNF2/RAD54 helicase family. As to quaternary structure, homohexamer. Interacts (via N-terminus) with RAD51. Interacts with NAP1L1. Interacts with BRD9; this interaction orchestrates RAD51-RAD54 complex formation. In terms of processing, acetylated. Acetylation promotes interaction with BRD9, and subsequently with RAD54, which is essential for homologous recombination (HR). Phosphorylated. Phosphorylation at Ser-572 by NEK1 specifically in G2 phase allows efficient removal of RAD51 filaments from DNA.

Its subcellular location is the nucleus. The catalysed reaction is ATP + H2O = ADP + phosphate + H(+). Its function is as follows. Plays an essential role in homologous recombination (HR) which is a major pathway for repairing DNA double-strand breaks (DSBs), single-stranded DNA (ssDNA) gaps, and stalled or collapsed replication forks. Acts as a molecular motor during the homology search and guides RAD51 ssDNA along a donor dsDNA thereby changing the homology search from the diffusion-based mechanism to a motor-guided mechanism. Also plays an essential role in RAD51-mediated synaptic complex formation which consists of three strands encased in a protein filament formed once homology is recognized. Once DNA strand exchange occured, dissociates RAD51 from nucleoprotein filaments formed on dsDNA. This Homo sapiens (Human) protein is DNA repair and recombination protein RAD54-like (RAD54L).